The chain runs to 304 residues: GTP cyclohydrolase FolE2 (304 aa).

The protein belongs to the GTP cyclohydrolase IV family.

The enzyme catalyses GTP + H2O = 7,8-dihydroneopterin 3'-triphosphate + formate + H(+). It participates in cofactor biosynthesis; 7,8-dihydroneopterin triphosphate biosynthesis; 7,8-dihydroneopterin triphosphate from GTP: step 1/1. In terms of biological role, converts GTP to 7,8-dihydroneopterin triphosphate. In Hahella chejuensis (strain KCTC 2396), this protein is GTP cyclohydrolase FolE2.